The sequence spans 170 residues: Lipoprotein signal peptidase (170 aa).

Transmembrane regions (helical) follow at residues 12 to 32, 67 to 87, and 93 to 113; these read WYWVVVLVFLADQLSKQWVLA, WQRWLFTIVAVGFSSLLTVWL, and SLLKLNLAYTLVIGGALGNLV. Active-site residues include Asp123 and Asp141. Residues 137-157 traverse the membrane as a helical segment; sequence FNIADSAIFIGAVLIIWDSFF.

The protein belongs to the peptidase A8 family.

The protein localises to the cell inner membrane. The enzyme catalyses Release of signal peptides from bacterial membrane prolipoproteins. Hydrolyzes -Xaa-Yaa-Zaa-|-(S,diacylglyceryl)Cys-, in which Xaa is hydrophobic (preferably Leu), and Yaa (Ala or Ser) and Zaa (Gly or Ala) have small, neutral side chains.. The protein operates within protein modification; lipoprotein biosynthesis (signal peptide cleavage). Its function is as follows. This protein specifically catalyzes the removal of signal peptides from prolipoproteins. This is Lipoprotein signal peptidase from Shewanella oneidensis (strain ATCC 700550 / JCM 31522 / CIP 106686 / LMG 19005 / NCIMB 14063 / MR-1).